Reading from the N-terminus, the 365-residue chain is NAD(P)H-quinone oxidoreductase subunit 1, chloroplastic (365 aa).

6 helical membrane-spanning segments follow: residues 30–50 (LVPI…IVWL), 104–124 (IAVI…HFVL), 129–149 (IGVF…LMSG), 253–273 (FGLF…FVAV), 302–322 (VFGT…FLFI), and 338–358 (LLNL…LLTT).

This sequence belongs to the complex I subunit 1 family. In terms of assembly, NDH is composed of at least 16 different subunits, 5 of which are encoded in the nucleus.

Its subcellular location is the plastid. It is found in the chloroplast thylakoid membrane. The catalysed reaction is a plastoquinone + NADH + (n+1) H(+)(in) = a plastoquinol + NAD(+) + n H(+)(out). The enzyme catalyses a plastoquinone + NADPH + (n+1) H(+)(in) = a plastoquinol + NADP(+) + n H(+)(out). Functionally, NDH shuttles electrons from NAD(P)H:plastoquinone, via FMN and iron-sulfur (Fe-S) centers, to quinones in the photosynthetic chain and possibly in a chloroplast respiratory chain. The immediate electron acceptor for the enzyme in this species is believed to be plastoquinone. Couples the redox reaction to proton translocation, and thus conserves the redox energy in a proton gradient. This is NAD(P)H-quinone oxidoreductase subunit 1, chloroplastic from Populus trichocarpa (Western balsam poplar).